The primary structure comprises 247 residues: GTP cyclohydrolase 1 type 2 homolog (247 aa).

A divalent metal cation contacts are provided by histidine 63, histidine 64, aspartate 101, histidine 215, and glutamate 219.

It belongs to the GTP cyclohydrolase I type 2/NIF3 family. As to quaternary structure, toroid-shaped homohexamer. In the hexamer, 3 dimers assemble to form a ring-like structure surrounding a central hole.

In terms of biological role, provides significant protection from radiation damage and may be involved in the degradation of radiation-damaged nucleotides. The chain is GTP cyclohydrolase 1 type 2 homolog (ybgI) from Salmonella typhi.